The sequence spans 351 residues: Lipoyl synthase (351 aa).

Polar residues predominate over residues 1–10 (MNDSGNSSKV). A disordered region spans residues 1–27 (MNDSGNSSKVNVRPPSAGLGAPSPGKR). Residues 14–24 (PPSAGLGAPSP) are compositionally biased toward low complexity. Positions 74, 79, 85, 100, 104, 107, and 311 each coordinate [4Fe-4S] cluster. The Radical SAM core domain occupies 86–300 (WEDREATFLI…KEQAKEIGFS (215 aa)).

It belongs to the radical SAM superfamily. Lipoyl synthase family. [4Fe-4S] cluster serves as cofactor.

Its subcellular location is the cytoplasm. It catalyses the reaction [[Fe-S] cluster scaffold protein carrying a second [4Fe-4S](2+) cluster] + N(6)-octanoyl-L-lysyl-[protein] + 2 oxidized [2Fe-2S]-[ferredoxin] + 2 S-adenosyl-L-methionine + 4 H(+) = [[Fe-S] cluster scaffold protein] + N(6)-[(R)-dihydrolipoyl]-L-lysyl-[protein] + 4 Fe(3+) + 2 hydrogen sulfide + 2 5'-deoxyadenosine + 2 L-methionine + 2 reduced [2Fe-2S]-[ferredoxin]. It functions in the pathway protein modification; protein lipoylation via endogenous pathway; protein N(6)-(lipoyl)lysine from octanoyl-[acyl-carrier-protein]: step 2/2. Catalyzes the radical-mediated insertion of two sulfur atoms into the C-6 and C-8 positions of the octanoyl moiety bound to the lipoyl domains of lipoate-dependent enzymes, thereby converting the octanoylated domains into lipoylated derivatives. In Tropheryma whipplei (strain TW08/27) (Whipple's bacillus), this protein is Lipoyl synthase.